The chain runs to 628 residues: Cytoplasmic dynein 1 intermediate chain 1 (628 aa).

2 stretches are compositionally biased toward basic and acidic residues: residues 1 to 13 and 20 to 60; these read MSDKSDLKAELER and QIRE…RETE. The tract at residues 1–114 is disordered; sequence MSDKSDLKAE…RTLQWDTDPS (114 aa). The residue at position 2 (S2) is an N-acetylserine. S50 is modified (phosphoserine). The segment covering 70 to 79 has biased composition (pro residues); the sequence is PEPPLVPTPM. A compositionally biased stretch (low complexity) spans 80 to 90; it reads SPSSKSVSTPS. S83 is subject to Phosphoserine. T88 bears the Phosphothreonine mark. Phosphoserine occurs at positions 90, 94, and 97. A compositionally biased stretch (polar residues) spans 105–114; that stretch reads RTLQWDTDPS. Residues 130–146 form an interaction with DYNLT1 region; sequence KLGVSKVTQVDFLPREV. Residues 152-204 form a disordered region; sequence ETQTPLATHQSEEDEEDEEMVEPKIGHDSELENQEKKQETKEAPPRELTEEEK. T159 bears the Phosphothreonine mark. Phosphoserine is present on residues S162 and S180. Positions 172-204 are enriched in basic and acidic residues; the sequence is VEPKIGHDSELENQEKKQETKEAPPRELTEEEK. WD repeat units follow at residues 268–317, 321–361, 370–411, 420–460, 465–510, 513–553, and 559–598; these read SKHR…TTPE, HCQS…RTPV, AHTH…TPQE, SKPV…AGIG, GHQG…PLYS, DNAD…EVPT, and EGASALNRVRWAQGGKEVAVGDSEGRIWIYDVGELAVPHN. A Phosphoserine modification is found at S618.

Belongs to the dynein intermediate chain family. In terms of assembly, homodimer. The cytoplasmic dynein 1 complex consists of two catalytic heavy chains (HCs) and a number of non-catalytic subunits presented by intermediate chains (ICs), light intermediate chains (LICs) and light chains (LCs); the composition seems to vary in respect to the IC, LIC and LC composition. The heavy chain homodimer serves as a scaffold for the probable homodimeric assembly of the respective non-catalytic subunits. The ICs and LICs bind directly to the HC dimer and the LCs assemble on the IC dimer. Interacts with DYNC1H1. Interacts with DYNLT1 and DYNLT3. Interacts with DCTN1. Interacts with DYNLL2. Interacts with MCRS1; the interaction is required for the proper distribution of centriolar satellites.

It localises to the cytoplasm. Its subcellular location is the chromosome. The protein resides in the centromere. It is found in the kinetochore. The protein localises to the cytoskeleton. It localises to the spindle pole. In terms of biological role, acts as one of several non-catalytic accessory components of the cytoplasmic dynein 1 complex that are thought to be involved in linking dynein to cargos and to adapter proteins that regulate dynein function. Cytoplasmic dynein 1 acts as a motor for the intracellular retrograde motility of vesicles and organelles along microtubules. The intermediate chains mediate the binding of dynein to dynactin via its 150 kDa component (p150-glued) DCTN1. May play a role in mediating the interaction of cytoplasmic dynein with membranous organelles and kinetochores. In Mus musculus (Mouse), this protein is Cytoplasmic dynein 1 intermediate chain 1 (Dync1i1).